Here is a 217-residue protein sequence, read N- to C-terminus: Thymidylate kinase (217 aa).

ATP is bound at residue Gly7 to Ser14.

This sequence belongs to the thymidylate kinase family.

The enzyme catalyses dTMP + ATP = dTDP + ADP. Functionally, phosphorylation of dTMP to form dTDP in both de novo and salvage pathways of dTTP synthesis. The polypeptide is Thymidylate kinase (Desulfovibrio desulfuricans (strain ATCC 27774 / DSM 6949 / MB)).